We begin with the raw amino-acid sequence, 137 residues long: Large ribosomal subunit protein uL16 (137 aa).

This sequence belongs to the universal ribosomal protein uL16 family. In terms of assembly, part of the 50S ribosomal subunit.

Binds 23S rRNA and is also seen to make contacts with the A and possibly P site tRNAs. This is Large ribosomal subunit protein uL16 from Mycoplasma mycoides subsp. mycoides SC (strain CCUG 32753 / NCTC 10114 / PG1).